Consider the following 335-residue polypeptide: Serpentine receptor class gamma-11 (335 aa).

7 consecutive transmembrane segments (helical) span residues 33 to 53 (FLQI…LYTI), 66 to 86 (FFLI…LDII), 98 to 118 (PIIA…MIVL), 154 to 174 (LKYL…NLII), 202 to 222 (FQLI…SVIF), 242 to 262 (GTAY…LFAF), and 271 to 291 (TIFG…PIIM).

It belongs to the nematode receptor-like protein srg family.

The protein localises to the membrane. The sequence is that of Serpentine receptor class gamma-11 (srg-11) from Caenorhabditis elegans.